The sequence spans 354 residues: Guanine nucleotide-binding protein G(i) subunit alpha-1 (354 aa).

A lipid anchor (N-myristoyl glycine) is attached at glycine 2. Cysteine 3 carries S-palmitoyl cysteine lipidation. One can recognise a G-alpha domain in the interval 32-354 (REVKLLLLGA…KNNLKDCGLF (323 aa)). The segment at 35–48 (KLLLLGAGESGKST) is G1 motif. GTP is bound by residues 43 to 48 (ESGKST), 150 to 151 (DS), and 175 to 178 (LRTR). Serine 47 is a Mg(2+) binding site. The G2 motif stretch occupies residues 173–181 (DVLRTRVKT). Residue threonine 181 participates in Mg(2+) binding. Positions 196–205 (FKMFDVGGQR) are G3 motif. Residues 200-204 (DVGGQ), 269-272 (NKKD), and alanine 326 each bind GTP. A G4 motif region spans residues 265 to 272 (ILFLNKKD). The interval 324 to 329 (TCATDT) is G5 motif.

This sequence belongs to the G-alpha family. G(i/o/t/z) subfamily. In terms of assembly, heterotrimeric G proteins are composed of 3 units; alpha, beta and gamma. The alpha chain contains the guanine nucleotide binding site. Part of a spindle orientation complex at least composed of GNAI1, GPSM2 and NUMA1. Identified in complex with the beta subunit GNB1 and the gamma subunit GNG1. Identified in complex with the beta subunit GNB1 and the gamma subunit GNG2. Component of the TAS2R14-GNAI1 complex, consisting of TAS2R14, GNAI1, GNB1 and GNG2; within the complex interacts with TAS2R14; this complex plays a role in the perception of bitterness. GTP binding causes dissociation of the heterotrimer, liberating the individual subunits so that they can interact with downstream effector proteins. Interacts (GDP-bound form) with GPSM1; this inhibits guanine nucleotide exchange and GTP binding. Interacts (GDP-bound form) with GPSM2 (via GoLoco domains); this inhibits guanine nucleotide exchange. Interacts with RGS10; this strongly enhances GTP hydrolysis. Interacts with RGS1 and RGS16; this strongly enhances GTPase activity. Interacts with RGS4. Interacts with RGS12. Interacts (via active GTP- or inactive GDP-bound forms) with RGS14 (via RGS and GoLoco domains). Interacts with RGS3, RGS6, RGS7, RGS8, RGS17, RGS18 and RGS20 (in vitro). Interacts (GDP-bound form) with RIC8A (via C-terminus); promoting GNAI1 folding and association with the plasma membrane. Interacts (inactive GDP-bound form) with NUCB1 (via GBA motif); the interaction leads to activation of GNAI1. Interacts (inactive GDP-bound form) with CCDC88C/DAPLE (via GBA motif); the interaction leads to activation of GNAI1. Interacts (inactive GDP-bound form) with CCDC8A/GIV (via GBA motif). Interacts with GPR15. Post-translationally, myristoylation at Gly-2 is required for membrane anchoring before palmitoylation. In terms of processing, palmitoylation at Cys-3 varies with membrane lipid composition.

The protein resides in the nucleus. It is found in the cytoplasm. The protein localises to the cell membrane. Its subcellular location is the cytoskeleton. It localises to the microtubule organizing center. The protein resides in the centrosome. It is found in the cell cortex. The protein localises to the membrane. Its function is as follows. Guanine nucleotide-binding proteins (G proteins) function as transducers downstream of G protein-coupled receptors (GPCRs) in numerous signaling cascades. The alpha chain contains the guanine nucleotide binding site and alternates between an active, GTP-bound state and an inactive, GDP-bound state. Signaling by an activated GPCR promotes GDP release and GTP binding. The alpha subunit has a low GTPase activity that converts bound GTP to GDP, thereby terminating the signal. Both GDP release and GTP hydrolysis are modulated by numerous regulatory proteins. Signaling is mediated via effector proteins, such as adenylate cyclase. Inhibits adenylate cyclase activity of ADCY1, ADCY5 and ADCY6, leading to decreased intracellular cAMP levels. The inactive GDP-bound form prevents the association of RGS14 with centrosomes and is required for the translocation of RGS14 from the cytoplasm to the plasma membrane. Required for normal cytokinesis during mitosis. Required for cortical dynein-dynactin complex recruitment during metaphase. This is Guanine nucleotide-binding protein G(i) subunit alpha-1 (GNAI1) from Pongo abelii (Sumatran orangutan).